A 257-amino-acid polypeptide reads, in one-letter code: Fimbrial assembly protein, serogroup E1 (257 aa).

This chain is Fimbrial assembly protein, serogroup E1 (fimB), found in Dichelobacter nodosus (Bacteroides nodosus).